Consider the following 389-residue polypeptide: Probable protein phosphatase 2C 47 (389 aa).

A PPM-type phosphatase domain is found at 76 to 346 (RSGSFADIGP…DNLTVIVVCF (271 aa)). Mn(2+) contacts are provided by D120, G121, D294, and D337.

This sequence belongs to the PP2C family. Mg(2+) serves as cofactor. Requires Mn(2+) as cofactor.

It carries out the reaction O-phospho-L-seryl-[protein] + H2O = L-seryl-[protein] + phosphate. The catalysed reaction is O-phospho-L-threonyl-[protein] + H2O = L-threonyl-[protein] + phosphate. This Oryza sativa subsp. japonica (Rice) protein is Probable protein phosphatase 2C 47.